A 762-amino-acid polypeptide reads, in one-letter code: Cell surface protein (762 aa).

A signal peptide spans 1 to 26 (MKNLKKLIAVVSTFALVFSAMAVGFA). SLH domains lie at 27 to 90 (ATTP…EMAK), 92 to 155 (EKSA…WPYG), and 156 to 204 (YLAK…KEVL). Residues Tyr-297, Tyr-516, Tyr-520, and Tyr-632 are each glycosylated (O-linked (Glc...) tyrosine).

Glycosylated; contains 8% carbohydrates, which correspond to about 40 to 50 sugar molecules per monomer. O-linked glycans consist of Glc, GalNAc and GlcNAc.

It is found in the secreted. The protein localises to the cell wall. Its subcellular location is the S-layer. In terms of biological role, the S-layer is a paracrystalline mono-layered assembly of proteins which coat the surface of bacteria. In Thermoanaerobacter kivui (Acetogenium kivui), this protein is Cell surface protein.